Consider the following 109-residue polypeptide: Gliadoralin-A (109 aa).

The first 16 residues, 1 to 16, serve as a signal peptide directing secretion; the sequence is MLVILLMVVVLALSSA. Residue glutamine 17 is modified to Pyrrolidone carboxylic acid. Positions 17 to 109 are disordered; it reads QDPNRDFVVS…PRYQQPRRAV (93 aa). Low complexity predominate over residues 35 to 109; it reads PSSQQGTVGG…PRYQQPRRAV (75 aa). Positions 107 to 109 are excised as a propeptide; that stretch reads RAV.

In terms of processing, predominantly proteolytically processed at its C-terminus before secretion to produce the major form gliadoralin A 1-90. Further proteloytically processed after secretion to produce minor forms. Potential substrate of transglutaminase. In terms of tissue distribution, found in saliva (at protein level). Secreted from the submandibular gland.

The protein localises to the secreted. Its function is as follows. May play a role in the formation of the protective mucosal protein pellicle involved in the reinforcement and protection of oral mucosal epithelial surface. The polypeptide is Gliadoralin-A (Rattus norvegicus (Rat)).